The following is a 382-amino-acid chain: Flap endonuclease 1-B (382 aa).

The tract at residues 1 to 104 (MGIHGLAKLI…GELAKRSERR (104 aa)) is N-domain. Position 34 (aspartate 34) interacts with Mg(2+). DNA is bound by residues arginine 47 and arginine 70. Positions 86, 158, 160, 179, and 181 each coordinate Mg(2+). The interval 122-253 (NIEKFNKRLV…KRAIDLIRQH (132 aa)) is I-domain. Glutamate 158 is a DNA binding site. Positions 231 and 233 each coordinate DNA. Position 233 (aspartate 233) interacts with Mg(2+). The segment at 336–344 (TQGRLDDFF) is interaction with PCNA. Residues 352 to 382 (STKRKEVESKGSTKKKSKTGGTPAGKFKRGK) form a disordered region.

The protein belongs to the XPG/RAD2 endonuclease family. FEN1 subfamily. As to quaternary structure, interacts with PCNA. Three molecules of fen1 bind to one PCNA trimer with each molecule binding to one PCNA monomer. PCNA stimulates the nuclease activity without altering cleavage specificity. It depends on Mg(2+) as a cofactor. Post-translationally, phosphorylated. Phosphorylation upon DNA damage induces relocalization to the nuclear plasma.

The protein resides in the nucleus. Its subcellular location is the nucleolus. The protein localises to the nucleoplasm. It is found in the mitochondrion. In terms of biological role, structure-specific nuclease with 5'-flap endonuclease and 5'-3' exonuclease activities involved in DNA replication and repair. During DNA replication, cleaves the 5'-overhanging flap structure that is generated by displacement synthesis when DNA polymerase encounters the 5'-end of a downstream Okazaki fragment. It enters the flap from the 5'-end and then tracks to cleave the flap base, leaving a nick for ligation. Also involved in the long patch base excision repair (LP-BER) pathway, by cleaving within the apurinic/apyrimidinic (AP) site-terminated flap. Acts as a genome stabilization factor that prevents flaps from equilibrating into structures that lead to duplications and deletions. Also possesses 5'-3' exonuclease activity on nicked or gapped double-stranded DNA, and exhibits RNase H activity. Also involved in replication and repair of rDNA and in repairing mitochondrial DNA. In Xenopus laevis (African clawed frog), this protein is Flap endonuclease 1-B (fen1-b).